A 904-amino-acid chain; its full sequence is MICAL-like protein 2 (904 aa).

The Calponin-homology (CH) domain occupies 1 to 107; sequence MAAIRALQQW…YVSQYYNYFH (107 aa). The segment at 1 to 260 is forms an intramolecular interaction with the C-terminal coiled coil domain keeping the protein in a closed conformation; sequence MAAIRALQQW…KLTGLVPRQP (260 aa). A phosphoserine mark is found at serine 110, serine 143, and serine 153. The tract at residues 117-178 is disordered; that stretch reads GVKRASEDSE…GGPPPKTDQA (62 aa). Residues 143–153 show a composition bias toward pro residues; it reads SPAPARKPPLS. Residues 186-248 form the LIM zinc-binding domain; that stretch reads STCGVCGKHV…TSHLPAAASA (63 aa). A Phosphoserine modification is found at serine 249. Residues 251–722 form a disordered region; that stretch reads KLTGLVPRQP…PANVPALPGE (472 aa). The segment at 261-388 is necessary and sufficient for interaction with actinins; it reads GAMGVDSRTS…GGAPRVAAPQ (128 aa). A mediates targeting to the cell plasma membrane region spans residues 261–697; it reads GAMGVDSRTS…EARVQSWKEE (437 aa). Over residues 267–277 the composition is skewed to polar residues; the sequence is SRTSCSPQKAQ. Low complexity-rich tracts occupy residues 293–314 and 349–362; these read NSPA…ATSV and SSAA…ASHP. Phosphoserine is present on serine 294. Pro residues predominate over residues 363 to 374; sequence AVPPSAPDPRPA. Residues 385–400 are compositionally biased toward low complexity; the sequence is AAPQTTLSSSSTSAAT. A compositionally biased stretch (polar residues) spans 408 to 433; that stretch reads PSASRTQQARNKFFQTSAVPPGTSLS. The span at 459-480 shows a compositional bias: low complexity; it reads ALSALEEAGAPAPGRPSPATAA. Serine 494 and serine 504 each carry phosphoserine. 2 stretches are compositionally biased toward low complexity: residues 520-534 and 542-553; these read LSTS…LPPA and SSGVGRVGAGSR. A compositionally biased stretch (polar residues) spans 564 to 578; sequence KSTTLTQDMSTSLQE. The span at 593–622 shows a compositional bias: basic and acidic residues; that stretch reads PVDRRSPAERTLKPKEPRALAEPRAGEAPR. Serine 598 is subject to Phosphoserine. A Phosphothreonine modification is found at threonine 644. The span at 647 to 661 shows a compositional bias: pro residues; the sequence is PASPGPSLPARSPSP. Phosphoserine occurs at positions 649, 658, 660, and 726. The segment at 698-807 is forms an intramolecular interaction with the N-terminal Calponin-homology and LIM zinc-binding domains-containing region keeping the protein in a closed conformation; sequence EKKPHLQGKP…LMYKSKAQRL (110 aa). The bMERB domain occupies 723-874; that stretch reads TVTSPVRLHP…EQEEDQMLRD (152 aa). Residues 735–771 are a coiled coil; sequence LSPEEIQRQLQDIERRLDALELRGVELEKRLRAAEGD. The mediates interaction with RAB13 and is required for transition from the closed to the opened conformation stretch occupies residues 807-903; it reads LEEQQLDIEG…WSPKSKSSPS (97 aa).

Interacts with RAB13 (GTP-bound form); competes with RAB8A and is involved in tight junctions assembly. Interacts with RAB8A; competes with RAB13 and is involved in E-cadherin endocytic recycling. Interacts with RAB8B. Interacts (preferentially in opened conformation) with ACTN1 and ACTN4; stimulated by RAB13 activation. Interacts (via calponin-homology (CH) domain) with the filamins FLNA, FLNB and FLNC (via actin-binding domain).

It is found in the cell membrane. Its subcellular location is the cell junction. The protein resides in the tight junction. It localises to the recycling endosome. The protein localises to the cell projection. It is found in the cytoplasm. Its subcellular location is the cytoskeleton. Functionally, effector of small Rab GTPases which is involved in junctional complexes assembly through the regulation of cell adhesion molecules transport to the plasma membrane and actin cytoskeleton reorganization. Regulates the endocytic recycling of occludins, claudins and E-cadherin to the plasma membrane and may thereby regulate the establishment of tight junctions and adherens junctions. In parallel, may regulate actin cytoskeleton reorganization directly through interaction with F-actin or indirectly through actinins and filamins. Most probably involved in the processes of epithelial cell differentiation, cell spreading and neurite outgrowth. Undergoes liquid-liquid phase separation to form tubular recycling endosomes. Plays 2 sequential roles in the biogenesis of tubular recycling endosomes: first organizes phase separation and then the closed form formed by interaction with RAB8A promotes endosomal tubulation. The polypeptide is MICAL-like protein 2 (Homo sapiens (Human)).